Here is a 387-residue protein sequence, read N- to C-terminus: Mannitol-1-phosphate 5-dehydrogenase (387 aa).

NAD(+) is bound at residue 3 to 14 (ALHFGAGNIGRG).

This sequence belongs to the mannitol dehydrogenase family.

It catalyses the reaction D-mannitol 1-phosphate + NAD(+) = beta-D-fructose 6-phosphate + NADH + H(+). The protein is Mannitol-1-phosphate 5-dehydrogenase of Yersinia pseudotuberculosis serotype O:1b (strain IP 31758).